A 164-amino-acid chain; its full sequence is Phosphopantetheine adenylyltransferase (164 aa).

Serine 10 lines the substrate pocket. Residues 10 to 11 (SF) and histidine 18 contribute to the ATP site. 3 residues coordinate substrate: lysine 42, leucine 74, and arginine 88. Residues 89 to 91 (GLR), glutamate 99, and 124 to 130 (YSFLSSS) contribute to the ATP site.

The protein belongs to the bacterial CoaD family. As to quaternary structure, homohexamer. It depends on Mg(2+) as a cofactor.

It is found in the cytoplasm. It carries out the reaction (R)-4'-phosphopantetheine + ATP + H(+) = 3'-dephospho-CoA + diphosphate. It functions in the pathway cofactor biosynthesis; coenzyme A biosynthesis; CoA from (R)-pantothenate: step 4/5. Functionally, reversibly transfers an adenylyl group from ATP to 4'-phosphopantetheine, yielding dephospho-CoA (dPCoA) and pyrophosphate. In Bacillus licheniformis (strain ATCC 14580 / DSM 13 / JCM 2505 / CCUG 7422 / NBRC 12200 / NCIMB 9375 / NCTC 10341 / NRRL NRS-1264 / Gibson 46), this protein is Phosphopantetheine adenylyltransferase.